The chain runs to 457 residues: UDP-N-acetylmuramoyl-tripeptide--D-alanyl-D-alanine ligase (457 aa).

ATP is bound at residue 113–119 (GSNGKTT).

It belongs to the MurCDEF family. MurF subfamily.

Its subcellular location is the cytoplasm. It carries out the reaction D-alanyl-D-alanine + UDP-N-acetyl-alpha-D-muramoyl-L-alanyl-gamma-D-glutamyl-meso-2,6-diaminopimelate + ATP = UDP-N-acetyl-alpha-D-muramoyl-L-alanyl-gamma-D-glutamyl-meso-2,6-diaminopimeloyl-D-alanyl-D-alanine + ADP + phosphate + H(+). It participates in cell wall biogenesis; peptidoglycan biosynthesis. In terms of biological role, involved in cell wall formation. Catalyzes the final step in the synthesis of UDP-N-acetylmuramoyl-pentapeptide, the precursor of murein. This Bacillus subtilis (strain 168) protein is UDP-N-acetylmuramoyl-tripeptide--D-alanyl-D-alanine ligase.